The chain runs to 265 residues: Undecaprenyl-diphosphatase (265 aa).

7 consecutive transmembrane segments (helical) span residues 42–62 (EAIPISIWLHLGTLLAAIVYF), 90–110 (ISFLLISTALTGIVGLPLLLF), 115–135 (VEISGGSATAVIGIMLIVTGI), 160–182 (VAQGFAAIPGISRSGITMSALLL), 195–215 (FLMSIPAVLVAEIGVGLMGMV), 222–242 (IVGLFFAFAFGLVTIDLFLKV), and 245–265 (KVDFSYFCIGLGVLSVLTMFL).

This sequence belongs to the UppP family.

Its subcellular location is the cell membrane. It catalyses the reaction di-trans,octa-cis-undecaprenyl diphosphate + H2O = di-trans,octa-cis-undecaprenyl phosphate + phosphate + H(+). Its function is as follows. Catalyzes the dephosphorylation of undecaprenyl diphosphate (UPP). The sequence is that of Undecaprenyl-diphosphatase from Methanococcoides burtonii (strain DSM 6242 / NBRC 107633 / OCM 468 / ACE-M).